The primary structure comprises 189 residues: Small heat shock protein 21 (189 aa).

Residues 26 to 53 (PPNFNPRKIAQGDNGKGQQVSRYGAGAG) are disordered. The region spanning 77–183 (KYFVGFDDNV…HEKIVNIPIS (107 aa)) is the sHSP domain.

The protein belongs to the small heat shock protein (HSP20) family.

Heat shock protein required for pathogenicity. Mediates thermotolerance and adaptation to oxidative stress and ethanol-induced stress. Required for invasive growth and filament formation under various filament inducing conditions. Plays a role in the capacity of damaging human-derived endothelial and oral epithelial cells during infection. Potentiates resistance to antifungal drugs, as well as resistance to killing by human neutrophils. Plays a major role in trehalose homeostasis in response to elevated temperatures. Regulates CEK1 activation by phosphorylation in response to elevated temperatures. In Candida albicans (strain SC5314 / ATCC MYA-2876) (Yeast), this protein is Small heat shock protein 21 (HSP21).